Here is a 175-residue protein sequence, read N- to C-terminus: Receptor activity-modifying protein 2 (175 aa).

The N-terminal stretch at Met-1 to Ala-42 is a signal peptide. At Gln-43–Glu-143 the chain is on the extracellular side. Intrachain disulfides connect Cys-68–Cys-99 and Cys-84–Cys-131. The N-linked (GlcNAc...) asparagine glycan is linked to Asn-130. A helical membrane pass occupies residues Asp-144–Val-165. The Cytoplasmic segment spans residues Trp-166–Ala-175.

This sequence belongs to the RAMP family. Heterodimer of CALCRL and RAMP2; the interaction forms the receptor complex for adrenomedullin/ADM. Heterodimer of CALCR and RAMP2; interaction forms the AMYR2 receptor complex for calcitonin/CALC and amylin/IAPP. Strongly expressed in lung, breast, immune system and fetal tissues.

Its subcellular location is the cell membrane. Functionally, accessory protein that interacts with and modulates the function of G-protein coupled receptors including calcitonin gene-related peptide type 1 receptor (CALCRL) and calcitonin receptor (CALCR). Required for the transport of CALCRL to the plasma membrane. Together with CALCRL, form a receptor complex for adrenomedullin/ADM. Together with CALCR, act as a receptor complex for calcitonin/CT/CALC. Together with CALCR, also act as a receptor complex for amylin/IAPP. The polypeptide is Receptor activity-modifying protein 2 (Homo sapiens (Human)).